We begin with the raw amino-acid sequence, 301 residues long: Oxygen-dependent coproporphyrinogen-III oxidase (301 aa).

Ser90 is a substrate binding site. 2 residues coordinate a divalent metal cation: His94 and His104. Residue His104 is the Proton donor of the active site. 106 to 108 (NVR) provides a ligand contact to substrate. Residues His143 and His173 each coordinate a divalent metal cation. Residues 238–273 (YVEFNLVWDRGTLFGLQSGGRTESILMSLPPIVKWR) form an important for dimerization region. 256–258 (GGR) is a binding site for substrate.

It belongs to the aerobic coproporphyrinogen-III oxidase family. Homodimer. The cofactor is a divalent metal cation.

It localises to the cytoplasm. The catalysed reaction is coproporphyrinogen III + O2 + 2 H(+) = protoporphyrinogen IX + 2 CO2 + 2 H2O. It functions in the pathway porphyrin-containing compound metabolism; protoporphyrin-IX biosynthesis; protoporphyrinogen-IX from coproporphyrinogen-III (O2 route): step 1/1. Functionally, involved in the heme biosynthesis. Catalyzes the aerobic oxidative decarboxylation of propionate groups of rings A and B of coproporphyrinogen-III to yield the vinyl groups in protoporphyrinogen-IX. The sequence is that of Oxygen-dependent coproporphyrinogen-III oxidase from Nitrosomonas eutropha (strain DSM 101675 / C91 / Nm57).